The sequence spans 76 residues: Conotoxin Vc6.9 (76 aa).

The first 19 residues, 1–19 (MEKLTILLLVAAVLMSTQA), serve as a signal peptide directing secretion. Residues 20-41 (LMQEQRQKAKINLFSKRKPSAE) constitute a propeptide that is removed on maturation. 3 disulfides stabilise this stretch: Cys-49/Cys-63, Cys-56/Cys-67, and Cys-62/Cys-72.

This sequence belongs to the conotoxin O2 superfamily. Expressed by the venom duct.

The protein resides in the secreted. Its function is as follows. Inhibits voltage-gated ion channels. This is Conotoxin Vc6.9 from Conus victoriae (Queen Victoria cone).